The primary structure comprises 246 residues: 1-(5-phosphoribosyl)-5-[(5-phosphoribosylamino)methylideneamino] imidazole-4-carboxamide isomerase (246 aa).

Aspartate 7 (proton acceptor) is an active-site residue. The active-site Proton donor is aspartate 130.

This sequence belongs to the HisA/HisF family.

Its subcellular location is the cytoplasm. The catalysed reaction is 1-(5-phospho-beta-D-ribosyl)-5-[(5-phospho-beta-D-ribosylamino)methylideneamino]imidazole-4-carboxamide = 5-[(5-phospho-1-deoxy-D-ribulos-1-ylimino)methylamino]-1-(5-phospho-beta-D-ribosyl)imidazole-4-carboxamide. It participates in amino-acid biosynthesis; L-histidine biosynthesis; L-histidine from 5-phospho-alpha-D-ribose 1-diphosphate: step 4/9. This is 1-(5-phosphoribosyl)-5-[(5-phosphoribosylamino)methylideneamino] imidazole-4-carboxamide isomerase from Sodalis glossinidius (strain morsitans).